Reading from the N-terminus, the 193-residue chain is Ancillary SecYEG translocon subunit (193 aa).

The Cytoplasmic portion of the chain corresponds to 1–11 (MIKNSYINEKL). The chain crosses the membrane as a helical span at residues 12 to 34 (NFYQKSFLTCMLLIVIVIVYFFS). Topologically, residues 35 to 193 (KNYLDKPKNS…IIQMKINNYN (159 aa)) are extracellular.

This sequence belongs to the YfgM family. In terms of assembly, interacts with the Sec translocon. Forms a complex with PpiD.

The protein resides in the cell membrane. May mediate protein transfer from the Sec translocon to the chaperone network via its extracellular C-terminal region. This chain is Ancillary SecYEG translocon subunit, found in Buchnera aphidicola subsp. Baizongia pistaciae (strain Bp).